The chain runs to 342 residues: Oxygen-dependent coproporphyrinogen-III oxidase (342 aa).

Ser-98 contacts substrate. A divalent metal cation-binding residues include His-102 and His-112. The active-site Proton donor is the His-112. Residue 114-116 participates in substrate binding; that stretch reads NYR. Residues His-146 and His-176 each contribute to the a divalent metal cation site. An important for dimerization region spans residues 266–301; it reads YVEFNLVWDRGTIFGLQTNGRTESILMSLPPLARWE.

Belongs to the aerobic coproporphyrinogen-III oxidase family. In terms of assembly, homodimer. Requires a divalent metal cation as cofactor.

It is found in the cytoplasm. It carries out the reaction coproporphyrinogen III + O2 + 2 H(+) = protoporphyrinogen IX + 2 CO2 + 2 H2O. The protein operates within porphyrin-containing compound metabolism; protoporphyrin-IX biosynthesis; protoporphyrinogen-IX from coproporphyrinogen-III (O2 route): step 1/1. Its function is as follows. Involved in the heme and chlorophyll biosynthesis. Catalyzes the aerobic oxidative decarboxylation of propionate groups of rings A and B of coproporphyrinogen-III to yield the vinyl groups in protoporphyrinogen-IX. In Prochlorococcus marinus (strain AS9601), this protein is Oxygen-dependent coproporphyrinogen-III oxidase.